Reading from the N-terminus, the 342-residue chain is Phosphate acyltransferase (342 aa).

Belongs to the PlsX family. As to quaternary structure, homodimer. Probably interacts with PlsY.

The protein resides in the cytoplasm. The catalysed reaction is a fatty acyl-[ACP] + phosphate = an acyl phosphate + holo-[ACP]. It participates in lipid metabolism; phospholipid metabolism. Functionally, catalyzes the reversible formation of acyl-phosphate (acyl-PO(4)) from acyl-[acyl-carrier-protein] (acyl-ACP). This enzyme utilizes acyl-ACP as fatty acyl donor, but not acyl-CoA. The chain is Phosphate acyltransferase from Blochmanniella pennsylvanica (strain BPEN).